We begin with the raw amino-acid sequence, 775 residues long: Chondroitin sulfate synthase 2 (775 aa).

Over 1-15 (MRASLLLSVLRPAGP) the chain is Cytoplasmic. Residues 16 to 34 (VAVGISLGFTLSLLSVTWV) form a helical; Signal-anchor for type II membrane protein membrane-spanning segment. Residues 35–775 (EEPCGPGPPQ…LFEQEQGNST (741 aa)) are Lumenal-facing. The tract at residues 37–100 (PCGPGPPQPG…YHPAQPGQAA (64 aa)) is disordered. Residues 54-66 (GNTNAARRPNSVQ) are compositionally biased toward polar residues. N-linked (GlcNAc...) asparagine glycosylation is found at Asn-138 and Asn-361. Residue Asp-617 participates in a divalent metal cation binding.

The protein belongs to the chondroitin N-acetylgalactosaminyltransferase family. Interacts with PRKN. Mn(2+) is required as a cofactor. Requires Co(2+) as cofactor. As to expression, ubiquitous. Highly expressed in pancreas, ovary, brain, heart, skeletal muscle, colon, kidney, liver, stomach, spleen and placenta. Expressed in brain, spleen, ovary, testis, lung and peripheral mononuclear cells. In terms of tissue distribution, also ubiquitous.

The protein resides in the golgi apparatus. Its subcellular location is the golgi stack membrane. The protein localises to the cytoplasm. It localises to the cytosol. It is found in the mitochondrion. The protein resides in the mitochondrion matrix. It catalyses the reaction 3-O-(beta-D-GlcA-(1-&gt;3)-beta-D-GalNAc-(1-&gt;4)-beta-D-GlcA-(1-&gt;3)-beta-D-Gal-(1-&gt;3)-beta-D-Gal-(1-&gt;4)-beta-D-Xyl)-L-seryl-[protein] + UDP-N-acetyl-alpha-D-galactosamine = 3-O-(beta-D-GalNAc-(1-&gt;4)-beta-D-GlcA-(1-&gt;3)-beta-D-GalNAc-(1-&gt;4)-beta-D-GlcA-(1-&gt;3)-beta-D-Gal-(1-&gt;3)-beta-D-Gal-(1-&gt;4)-beta-D-Xyl)-L-seryl-[protein] + UDP + H(+). It carries out the reaction 3-O-{beta-D-GlcA-(1-&gt;3)-[beta-D-GalNAc-(1-&gt;4)-beta-D-GlcA-(1-&gt;3)](n)-beta-D-GalNAc-(1-&gt;4)-beta-D-GlcA-(1-&gt;3)-beta-D-Gal-(1-&gt;3)-beta-D-Gal-(1-&gt;4)-beta-D-Xyl}-L-seryl-[protein] + UDP-N-acetyl-alpha-D-galactosamine = 3-O-{[beta-D-GalNAc-(1-&gt;4)-beta-D-GlcA-(1-&gt;3)](n+1)-beta-D-GalNAc-(1-&gt;4)-beta-D-GlcA-(1-&gt;3)-beta-D-Gal-(1-&gt;3)-beta-D-Gal-(1-&gt;4)-beta-D-Xyl}-L-seryl-[protein] + UDP + H(+). The catalysed reaction is 3-O-(beta-D-GalNAc-(1-&gt;4)-beta-D-GlcA-(1-&gt;3)-beta-D-Gal-(1-&gt;3)-beta-D-Gal-(1-&gt;4)-beta-D-Xyl)-L-seryl-[protein] + UDP-alpha-D-glucuronate = 3-O-(beta-D-GlcA-(1-&gt;3)-beta-D-GalNAc-(1-&gt;4)-beta-D-GlcA-(1-&gt;3)-beta-D-Gal-(1-&gt;3)-beta-D-Gal-(1-&gt;4)-beta-D-Xyl)-L-seryl-[protein] + UDP + H(+). The enzyme catalyses 3-O-{[beta-D-GalNAc-(1-&gt;4)-beta-D-GlcA-(1-&gt;3)](n)-beta-D-GalNAc-(1-&gt;4)-beta-D-GlcA-(1-&gt;3)-beta-D-Gal-(1-&gt;3)-beta-D-Gal-(1-&gt;4)-beta-D-Xyl}-L-seryl-[protein] + UDP-alpha-D-glucuronate = 3-O-{beta-D-GlcA-(1-&gt;3)-[beta-D-GalNAc-(1-&gt;4)-beta-D-GlcA-(1-&gt;3)](n)-beta-D-GalNAc-(1-&gt;4)-beta-D-GlcA-(1-&gt;3)-beta-D-Gal-(1-&gt;3)-beta-D-Gal-(1-&gt;4)-beta-D-Xyl}-L-seryl-[protein] + UDP + H(+). Its function is as follows. Has both beta-1,3-glucuronic acid and beta-1,4-N-acetylgalactosamine transferase activity. Transfers glucuronic acid (GlcUA) from UDP-GlcUA and N-acetylgalactosamine (GalNAc) from UDP-GalNAc to the non-reducing end of the elongating chondroitin polymer. Seems to act as a specific activating factor for CHSY1 in chondroitin polymerization. Functionally, may facilitate PRKN transport into the mitochondria. In collaboration with PRKN, may enhance cell viability and protect cells from oxidative stress. The polypeptide is Chondroitin sulfate synthase 2 (Homo sapiens (Human)).